An 892-amino-acid polypeptide reads, in one-letter code: MDHYDSQQTNDYMQPEEDWDRDLLLDPAWEKQQRKTFTAWCNSHLRKAGTQIENIEEDFRDGLKLMLLLEVISGERLAKPERGKMRVHKISNVNKALDFIASKGVKLVSIGAEEIVDGNVKMTLGMIWTIILRFAIQDISVEETSAKEGLLLWCQRKTAPYKNVNIQNFHISWKDGLGFCALIHRHRPELIDYGKLRKDDPLTNLNTAFDVAERYLDIPKMLDAEDIVGTARPDEKAIMTYVSSFYHAFSGAQKAETAANRICKVLAVNQENEQLMEDYEKLASDLLEWIRRTIPWLENRVPENTMQAMQQKLEDFRDYRRLHKPPKVQEKCQLEINFNTLQTKLRLSNRPAFMPSEGRMVSDINNAWGCLEQAEKGYEEWLLNEIRRLERLDHLAEKFRQKASIHEAWTDGKEAMLRQKDYETATLSEIKALLKKHEAFESDLAAHQDRVEQIAAIAQELNELDYYDSPSVNARCQKICDQWDNLGALTQKRREALERTEKLLETIDQLYLEYAKRAAPFNNWMEGAMEDLQDTFIVHTIEEIQGLTTAHEQFKATLPDADKERLAILGIHNEVSKIVQTYHVNMAGTNPYTTITPQEINGKWDHVRQLVPRRDQALTEEHSRQQHNERLRKQFGAQANVIGPWIQTKMEEIGRISIEMHGTLEDQLSHLRQYEKSIVNYKPKIDQLEGDHQLIQEALIFDNKHTNYTMEHIRVGWEQLLTTIARTINEVENQILTRDAKGISQEQMNEFRASFNHFDRDHSGTLGPEEFKACLISLGYDIGNDPQGEAEFARIMSIVDPNRLGVVTFQAFIDFMSRETADTDTADQVMASFKILAGDKNYITGDELRRELPPDQAEYCIARMAPYAGPDSVPGALDYMSFSTALYGESDL.

Met1 is subject to N-acetylmethionine. The segment at 1–247 (MDHYDSQQTN…IMTYVSSFYH (247 aa)) is actin-binding. The residue at position 6 (Ser6) is a Phosphoserine. Tyr12 carries the phosphotyrosine; by FAK1 modification. 2 consecutive Calponin-homology (CH) domains span residues 31–135 (KQQR…LRFA) and 144–250 (TSAK…HAFS). 2 positions are modified to N6-acetyllysine: Lys95 and Lys195. 4 Spectrin repeats span residues 274–384 (QLME…WLLN), 394–499 (HLAE…ALER), 509–620 (QLYL…ALTE), and 630–733 (RLRK…EVEN). Residues 274–733 (QLMEDYEKLA…IARTINEVEN (460 aa)) form an interaction with DDN region. The residue at position 471 (Ser471) is a Phosphoserine. Lys676 is subject to N6-acetyllysine. Ser677 bears the Phosphoserine mark. EF-hand domains lie at 746–781 (EQMNEFRASFNHFDRDHSGTLGPEEFKACLISLGYD) and 787–822 (QGEAEFARIMSIVDPNRLGVVTFQAFIDFMSRETAD). Residues Asp759, Asp761, Ser763, Thr765, and Glu770 each contribute to the Ca(2+) site. Phosphoserine is present on Ser890.

This sequence belongs to the alpha-actinin family. As to quaternary structure, homodimer; antiparallel. Interacts with MYOZ2, TTID and LPP. Interacts with DDN. Interacts with PSD. Interacts with MICALL2. Interacts with DNM2 and CTTN. Interacts with PDLIM1. Interacts with PDLIM2. Interacts with PDLIM4 (via PDZ domain). Interacts with IGSF8.

The protein localises to the cytoplasm. Its subcellular location is the cytoskeleton. It localises to the myofibril. The protein resides in the sarcomere. It is found in the z line. The protein localises to the cell membrane. Its subcellular location is the cell junction. It localises to the cell projection. The protein resides in the ruffle. Functionally, F-actin cross-linking protein which is thought to anchor actin to a variety of intracellular structures. Association with IGSF8 regulates the immune synapse formation and is required for efficient T-cell activation. The sequence is that of Alpha-actinin-1 (Actn1) from Rattus norvegicus (Rat).